Consider the following 269-residue polypeptide: Thymidylate synthase (269 aa).

DUMP is bound by residues arginine 21 and arginine 125–arginine 126. Residue cysteine 145 is the Nucleophile of the active site. Residues arginine 171–aspartate 174, asparagine 182, and histidine 212–tyrosine 214 contribute to the dUMP site. Aspartate 174 serves as a coordination point for (6R)-5,10-methylene-5,6,7,8-tetrahydrofolate. Alanine 268 contributes to the (6R)-5,10-methylene-5,6,7,8-tetrahydrofolate binding site.

This sequence belongs to the thymidylate synthase family. Bacterial-type ThyA subfamily. As to quaternary structure, homodimer.

It localises to the cytoplasm. The enzyme catalyses dUMP + (6R)-5,10-methylene-5,6,7,8-tetrahydrofolate = 7,8-dihydrofolate + dTMP. The protein operates within pyrimidine metabolism; dTTP biosynthesis. Functionally, catalyzes the reductive methylation of 2'-deoxyuridine-5'-monophosphate (dUMP) to 2'-deoxythymidine-5'-monophosphate (dTMP) while utilizing 5,10-methylenetetrahydrofolate (mTHF) as the methyl donor and reductant in the reaction, yielding dihydrofolate (DHF) as a by-product. This enzymatic reaction provides an intracellular de novo source of dTMP, an essential precursor for DNA biosynthesis. The protein is Thymidylate synthase of Cutibacterium acnes (strain DSM 16379 / KPA171202) (Propionibacterium acnes).